The following is a 478-amino-acid chain: Ribulose bisphosphate carboxylase large chain (478 aa).

Positions 1-2 (MS) are excised as a propeptide. Proline 3 carries the N-acetylproline modification. Residue lysine 14 is modified to N6,N6,N6-trimethyllysine. Asparagine 123 and threonine 173 together coordinate substrate. Residue lysine 175 is the Proton acceptor of the active site. Lysine 177 lines the substrate pocket. The Mg(2+) site is built by lysine 201, aspartate 203, and glutamate 204. Lysine 201 bears the N6-carboxylysine mark. Catalysis depends on histidine 294, which acts as the Proton acceptor. Residues arginine 295, histidine 327, and serine 379 each contribute to the substrate site.

It belongs to the RuBisCO large chain family. Type I subfamily. As to quaternary structure, heterohexadecamer of 8 large chains and 8 small chains; disulfide-linked. The disulfide link is formed within the large subunit homodimers. Mg(2+) is required as a cofactor. The disulfide bond which can form in the large chain dimeric partners within the hexadecamer appears to be associated with oxidative stress and protein turnover.

The protein localises to the plastid. It is found in the chloroplast. It catalyses the reaction 2 (2R)-3-phosphoglycerate + 2 H(+) = D-ribulose 1,5-bisphosphate + CO2 + H2O. It carries out the reaction D-ribulose 1,5-bisphosphate + O2 = 2-phosphoglycolate + (2R)-3-phosphoglycerate + 2 H(+). Functionally, ruBisCO catalyzes two reactions: the carboxylation of D-ribulose 1,5-bisphosphate, the primary event in carbon dioxide fixation, as well as the oxidative fragmentation of the pentose substrate in the photorespiration process. Both reactions occur simultaneously and in competition at the same active site. This Neurachne munroi protein is Ribulose bisphosphate carboxylase large chain.